The sequence spans 306 residues: Palmitoyl-protein thioesterase ABHD10, mitochondrial (306 aa).

Residues 1-52 constitute a mitochondrion transit peptide; sequence MAGVGLAAVPAWVPCRRWGLAAVTFGFHHGLSTLLARKTERAPQWLRACRHK. An AB hydrolase-1 domain is found at 78-177; the sequence is IIFIPGYISN…KVVALVGVAT (100 aa). Residues serine 152, aspartate 249, and histidine 279 each act as charge relay system in the active site.

The protein belongs to the AB hydrolase superfamily.

The protein resides in the mitochondrion. It carries out the reaction S-hexadecanoyl-L-cysteinyl-[protein] + H2O = L-cysteinyl-[protein] + hexadecanoate + H(+). The enzyme catalyses mycophenolic acid O-acyl-beta-D-glucuronide + H2O = mycophenolate + D-glucuronate + H(+). With respect to regulation, inhibited by palmostatin-B. Its function is as follows. Acts as an acyl-protein thioesterase that hydrolyzes fatty acids from acylated residues in proteins. Regulates the mitochondrial S-depalmitoylation of the nucleophilic active site residue of peroxiredoxin-5/PRDX5, a key antioxidant protein, therefore modulating mitochondrial antioxidant ability. Also catalyzes the deglucuronidation of mycophenolic acid acyl-glucuronide, an active metabolite of the immunosuppressant drug mycophenolate. The polypeptide is Palmitoyl-protein thioesterase ABHD10, mitochondrial (ABHD10) (Bos taurus (Bovine)).